A 68-amino-acid chain; its full sequence is Beta-defensin 1 (68 aa).

An N-terminal signal peptide occupies residues 1 to 21 (MRTSYLLLFTLCLLLSEMASG). Positions 22–32 (DNFLTGLGHRS) are excised as a propeptide. 3 disulfide bridges follow: Cys-37–Cys-66, Cys-44–Cys-59, and Cys-49–Cys-67.

The protein belongs to the beta-defensin family. In terms of assembly, monomer. Homodimer.

The protein localises to the secreted. It is found in the membrane. Has bactericidal activity. May act as a ligand for C-C chemokine receptor CCR6. Positively regulates the sperm motility and bactericidal activity in a CCR6-dependent manner. Binds to CCR6 and triggers Ca2+ mobilization in the sperm which is important for its motility. This is Beta-defensin 1 (DEFB1) from Macaca mulatta (Rhesus macaque).